A 431-amino-acid polypeptide reads, in one-letter code: Glutamate-1-semialdehyde 2,1-aminomutase (431 aa).

K269 carries the post-translational modification N6-(pyridoxal phosphate)lysine.

This sequence belongs to the class-III pyridoxal-phosphate-dependent aminotransferase family. HemL subfamily. Homodimer. Pyridoxal 5'-phosphate is required as a cofactor.

Its subcellular location is the cytoplasm. The catalysed reaction is (S)-4-amino-5-oxopentanoate = 5-aminolevulinate. The protein operates within porphyrin-containing compound metabolism; protoporphyrin-IX biosynthesis; 5-aminolevulinate from L-glutamyl-tRNA(Glu): step 2/2. It functions in the pathway porphyrin-containing compound metabolism; chlorophyll biosynthesis. The polypeptide is Glutamate-1-semialdehyde 2,1-aminomutase (Chlorobaculum tepidum (strain ATCC 49652 / DSM 12025 / NBRC 103806 / TLS) (Chlorobium tepidum)).